The chain runs to 293 residues: Acetylglutamate kinase (293 aa).

Residues 68-69 (GG), Arg-90, and Asn-189 each bind substrate.

This sequence belongs to the acetylglutamate kinase family. ArgB subfamily.

The protein localises to the cytoplasm. The catalysed reaction is N-acetyl-L-glutamate + ATP = N-acetyl-L-glutamyl 5-phosphate + ADP. It functions in the pathway amino-acid biosynthesis; L-arginine biosynthesis; N(2)-acetyl-L-ornithine from L-glutamate: step 2/4. Its function is as follows. Catalyzes the ATP-dependent phosphorylation of N-acetyl-L-glutamate. In Mycolicibacterium smegmatis (strain ATCC 700084 / mc(2)155) (Mycobacterium smegmatis), this protein is Acetylglutamate kinase.